The sequence spans 779 residues: MINHENNDLFDLNEALKVENLTLNDYEEICKRLKRKPNRTELGMFGVMWSEHCCYRNSKPLLSKFPTKGKNVLVGPGENAGVIDVGNNQKLVFKIESHNHPSAIEPFQGAATGVGGILRDIFTMGARPIAVLNSLRFGNLDKSSNVDLLRGVVSGIAHYGNCVGVPTVGGEIDFDDSYSGNPLVNVMALGLLETEEIVCSGAKNVGSPVLYVGNTTGRDGVGGASFASSELTTTSLDDRPAVQVGDPFIEKSLIEACLDAFKTGDVIAAQDMGAAGLTCSSAEMAANGNLGISIDLDLVPSREDDMSSYQYLLSESQERMLFVVKEEKISDLIEKFNKWGLYASVIGEVIGTNEVIISHKGNIVAQIPTSALSDDTPVNFHNVINNPPDDLLNKWEWKENDLPEINEQKIFSLKENKKFSFSEIILKLLSNPSIASKRWIYKQYDSQVQANTVFTPGKSDAAVVRLREQNKKSKNKVFSGVAASVDCNSRWVALDPFRGSIAAVAESARNVSCVGAEPVAITNNLNFSSPENEIGYWQLSSSCNGIAEACKALETPVTGGNVSLYNESKNKDNLITPINPTPVIGMVGKIDNVEKAISSEWKNIEDQIWLIGSYKSDTTTAASSYLEYFHGEITGRPPKIDLSDEKFCQSFLRNAILNSLVVSSHDISDGGLAIALAESCILSARGATIELEKDLNRVDNLLFAEGGSRIIFSISKMKQNEWFNYLKQNQINFPSSVYVKKIGYVSSDTLKIKINEKNICNIRVEELTEKFNNSISDYF.

His-52 is an active-site residue. Positions 55 and 94 each coordinate ATP. Glu-96 is a Mg(2+) binding site. Substrate-binding positions include 97-100 (SHNH) and Arg-119. The active-site Proton acceptor is the His-98. Asp-120 lines the Mg(2+) pocket. Gln-243 lines the substrate pocket. Asp-271 is a Mg(2+) binding site. Substrate is bound at residue 315–317 (ESQ). ATP is bound by residues Asn-523 and Gly-560. Position 561 (Asn-561) interacts with Mg(2+). Residue Ser-563 participates in substrate binding.

Belongs to the FGAMS family. Monomer. Part of the FGAM synthase complex composed of 1 PurL, 1 PurQ and 2 PurS subunits.

The protein localises to the cytoplasm. The enzyme catalyses N(2)-formyl-N(1)-(5-phospho-beta-D-ribosyl)glycinamide + L-glutamine + ATP + H2O = 2-formamido-N(1)-(5-O-phospho-beta-D-ribosyl)acetamidine + L-glutamate + ADP + phosphate + H(+). It participates in purine metabolism; IMP biosynthesis via de novo pathway; 5-amino-1-(5-phospho-D-ribosyl)imidazole from N(2)-formyl-N(1)-(5-phospho-D-ribosyl)glycinamide: step 1/2. Functionally, part of the phosphoribosylformylglycinamidine synthase complex involved in the purines biosynthetic pathway. Catalyzes the ATP-dependent conversion of formylglycinamide ribonucleotide (FGAR) and glutamine to yield formylglycinamidine ribonucleotide (FGAM) and glutamate. The FGAM synthase complex is composed of three subunits. PurQ produces an ammonia molecule by converting glutamine to glutamate. PurL transfers the ammonia molecule to FGAR to form FGAM in an ATP-dependent manner. PurS interacts with PurQ and PurL and is thought to assist in the transfer of the ammonia molecule from PurQ to PurL. The sequence is that of Phosphoribosylformylglycinamidine synthase subunit PurL from Prochlorococcus marinus (strain AS9601).